The sequence spans 348 residues: NADH-ubiquinone oxidoreductase chain 2 (348 aa).

The next 9 membrane-spanning stretches (helical) occupy residues 13-33 (VGLG…WMGL), 60-80 (FLTQ…NAWM), 93-113 (IAST…PMHF), 149-169 (IDPL…GWGG), 178-197 (ILAY…IQYA), 202-219 (LIAL…FLTL), 246-266 (LVLL…KWLI), 274-294 (DLPI…YFYL), and 326-346 (LALF…ILML).

The protein belongs to the complex I subunit 2 family.

It is found in the mitochondrion inner membrane. It carries out the reaction a ubiquinone + NADH + 5 H(+)(in) = a ubiquinol + NAD(+) + 4 H(+)(out). Functionally, core subunit of the mitochondrial membrane respiratory chain NADH dehydrogenase (Complex I) that is believed to belong to the minimal assembly required for catalysis. Complex I functions in the transfer of electrons from NADH to the respiratory chain. The immediate electron acceptor for the enzyme is believed to be ubiquinone. This chain is NADH-ubiquinone oxidoreductase chain 2 (MT-ND2), found in Cyprinus carpio (Common carp).